Reading from the N-terminus, the 492-residue chain is Sestrin-1 (492 aa).

An N-terminal domain; may mediate the alkylhydroperoxide reductase activity region spans residues 71-252 (FADSFAALGR…ICDITNGNHS (182 aa)). The Cysteine sulfenic acid (-SOH) intermediate role is filled by Cys130. A phosphoserine mark is found at Ser293 and Ser314. Residues 321–492 (PARDVSRHFE…ALRAITRYMT (172 aa)) form a C-terminal domain; mediates TORC1 regulation region. Residues 386-389 (TYNT), Thr398, and Glu463 contribute to the L-leucine site.

The protein belongs to the sestrin family. Interacts with the GATOR2 complex which is composed of MIOS, SEC13, SEH1L, WDR24 and WDR59; the interaction is negatively regulated by leucine. Interacts with RRAGA, RRAGB, RRAGC and RRAGD; may function as a guanine nucleotide dissociation inhibitor for RRAGs and regulate them. Interacts with KEAP1, RBX1 and SQSTM1; in the SQSTM1-dependent autophagic degradation of KEAP1. May interact with PRDX1. As to expression, highly expressed in heart and also detected in liver and skeletal muscles (at protein level).

It localises to the nucleus. It is found in the cytoplasm. The enzyme catalyses a hydroperoxide + L-cysteinyl-[protein] = S-hydroxy-L-cysteinyl-[protein] + an alcohol. Functions as an intracellular leucine sensor that negatively regulates the TORC1 signaling pathway through the GATOR complex. In absence of leucine, binds the GATOR subcomplex GATOR2 and prevents TORC1 signaling. Binding of leucine to SESN2 disrupts its interaction with GATOR2 thereby activating the TORC1 signaling pathway. This stress-inducible metabolic regulator may also play a role in protection against oxidative and genotoxic stresses. May positively regulate the transcription by NFE2L2 of genes involved in the response to oxidative stress by facilitating the SQSTM1-mediated autophagic degradation of KEAP1. Moreover, may prevent the accumulation of reactive oxygen species (ROS) through the alkylhydroperoxide reductase activity born by the N-terminal domain of the protein. Was originally reported to contribute to oxidative stress resistance by reducing PRDX1. However, this could not be confirmed. The protein is Sestrin-1 of Mus musculus (Mouse).